An 896-amino-acid polypeptide reads, in one-letter code: Microsomal triglyceride transfer protein large subunit (896 aa).

Residues 1–21 (MILLAVLFLCFFSSYSASVKG) form the signal peptide. A Vitellogenin domain is found at 28–659 (LNNERLYKLT…IFQYIGKAEL (632 aa)). A disulfide bridge connects residues Cys-174 and Cys-194.

In terms of assembly, heterodimer; heterodimerizes with the protein disulfide isomerase (P4HB/PDI). Interacts with APOB. Interacts with PRAP1.

The protein localises to the endoplasmic reticulum. Its subcellular location is the golgi apparatus. It catalyses the reaction a 1,2-diacyl-sn-glycero-3-phosphocholine(in) = a 1,2-diacyl-sn-glycero-3-phosphocholine(out). The catalysed reaction is a 1,2-diacyl-sn-glycero-3-phosphoethanolamine(in) = a 1,2-diacyl-sn-glycero-3-phosphoethanolamine(out). The enzyme catalyses a cholesterol ester(in) = a cholesterol ester(out). It carries out the reaction a triacyl-sn-glycerol(in) = a triacyl-sn-glycerol(out). Catalyzes the transport of triglyceride, cholesteryl ester, and phospholipid between phospholipid surfaces. Required for the assembly and secretion of plasma lipoproteins that contain apolipoprotein B. May be involved in regulating cholesteryl ester biosynthesis in cells that produce lipoproteins. The polypeptide is Microsomal triglyceride transfer protein large subunit (Mttp) (Rattus norvegicus (Rat)).